A 412-amino-acid chain; its full sequence is L-cysteine:1D-myo-inositol 2-amino-2-deoxy-alpha-D-glucopyranoside ligase (412 aa).

Zn(2+) is bound at residue Cys43. L-cysteinyl-5'-AMP-binding positions include 43-46 (CGIT), Thr58, and 81-83 (NVT). Residues 45–55 (ITPYDATHLGH) carry the 'HIGH' region motif. The short motif at 186-191 (ERGGDP) is the 'ERGGDP' region element. Residue Trp227 coordinates L-cysteinyl-5'-AMP. Cys231 lines the Zn(2+) pocket. 249-251 (GND) is an L-cysteinyl-5'-AMP binding site. His256 contributes to the Zn(2+) binding site. Ile283 is a binding site for L-cysteinyl-5'-AMP. A 'KMSKS' region motif is present at residues 289-293 (KMSKS).

It belongs to the class-I aminoacyl-tRNA synthetase family. MshC subfamily. In terms of assembly, monomer. Zn(2+) is required as a cofactor.

It catalyses the reaction 1D-myo-inositol 2-amino-2-deoxy-alpha-D-glucopyranoside + L-cysteine + ATP = 1D-myo-inositol 2-(L-cysteinylamino)-2-deoxy-alpha-D-glucopyranoside + AMP + diphosphate + H(+). Catalyzes the ATP-dependent condensation of GlcN-Ins and L-cysteine to form L-Cys-GlcN-Ins. The polypeptide is L-cysteine:1D-myo-inositol 2-amino-2-deoxy-alpha-D-glucopyranoside ligase (Salinispora arenicola (strain CNS-205)).